A 274-amino-acid chain; its full sequence is Large ribosomal subunit protein uL2 (274 aa).

The segment at 224 to 259 (AMNPVDHPHGGGEGRTSGGRHPVTPWGIPTKGYKTR) is disordered.

Belongs to the universal ribosomal protein uL2 family. As to quaternary structure, part of the 50S ribosomal subunit. Forms a bridge to the 30S subunit in the 70S ribosome.

Its function is as follows. One of the primary rRNA binding proteins. Required for association of the 30S and 50S subunits to form the 70S ribosome, for tRNA binding and peptide bond formation. It has been suggested to have peptidyltransferase activity; this is somewhat controversial. Makes several contacts with the 16S rRNA in the 70S ribosome. This Citrifermentans bemidjiense (strain ATCC BAA-1014 / DSM 16622 / JCM 12645 / Bem) (Geobacter bemidjiensis) protein is Large ribosomal subunit protein uL2.